Consider the following 188-residue polypeptide: Probable RNA 2'-phosphotransferase (188 aa).

This sequence belongs to the KptA/TPT1 family.

In terms of biological role, removes the 2'-phosphate from RNA via an intermediate in which the phosphate is ADP-ribosylated by NAD followed by a presumed transesterification to release the RNA and generate ADP-ribose 1''-2''-cyclic phosphate (APPR&gt;P). May function as an ADP-ribosylase. This is Probable RNA 2'-phosphotransferase from Pseudomonas savastanoi pv. phaseolicola (strain 1448A / Race 6) (Pseudomonas syringae pv. phaseolicola (strain 1448A / Race 6)).